The primary structure comprises 326 residues: tRNA-dihydrouridine(20/20a) synthase (326 aa).

Residues 11–13 and Q63 contribute to the FMN site; that span reads PML. The Proton donor role is filled by C93. FMN-binding positions include K132, H165, 205-207, and 227-228; these read NGG and GR.

Belongs to the Dus family. DusA subfamily. Requires FMN as cofactor.

The enzyme catalyses 5,6-dihydrouridine(20) in tRNA + NADP(+) = uridine(20) in tRNA + NADPH + H(+). The catalysed reaction is 5,6-dihydrouridine(20) in tRNA + NAD(+) = uridine(20) in tRNA + NADH + H(+). It catalyses the reaction 5,6-dihydrouridine(20a) in tRNA + NADP(+) = uridine(20a) in tRNA + NADPH + H(+). It carries out the reaction 5,6-dihydrouridine(20a) in tRNA + NAD(+) = uridine(20a) in tRNA + NADH + H(+). Catalyzes the synthesis of 5,6-dihydrouridine (D), a modified base found in the D-loop of most tRNAs, via the reduction of the C5-C6 double bond in target uridines. Specifically modifies U20 and U20a in tRNAs. The polypeptide is tRNA-dihydrouridine(20/20a) synthase (Vibrio vulnificus (strain CMCP6)).